The sequence spans 141 residues: Large ribosomal subunit protein uL13 (141 aa).

The protein belongs to the universal ribosomal protein uL13 family. As to quaternary structure, part of the 50S ribosomal subunit.

Functionally, this protein is one of the early assembly proteins of the 50S ribosomal subunit, although it is not seen to bind rRNA by itself. It is important during the early stages of 50S assembly. The protein is Large ribosomal subunit protein uL13 of Helicobacter pylori (strain G27).